The sequence spans 500 residues: UDP-GalNAc:beta-1,3-N-acetylgalactosaminyltransferase 2 (500 aa).

Residues 1–6 (MRNWLV) are Cytoplasmic-facing. Residues 7 to 23 (LLCPCVLGAALHLWLRL) traverse the membrane as a helical; Signal-anchor for type II membrane protein segment. The Lumenal portion of the chain corresponds to 24–500 (RSPPPACASG…CGDPCRCQAR (477 aa)). Asn116 and Asn174 each carry an N-linked (GlcNAc...) asparagine glycan.

Belongs to the glycosyltransferase 31 family. In terms of processing, N-glycosylated. Expressed in all tissues examined, but at highest levels in testis, adipose tissue, skeletal muscle and ovary.

It is found in the golgi apparatus membrane. The protein localises to the endoplasmic reticulum. It catalyses the reaction 3-O-(N-acetyl-beta-D-glucosaminyl-(1-&gt;4)-alpha-D-mannosyl)-L-threonyl-[protein] + UDP-N-acetyl-alpha-D-galactosamine = 3-O-[beta-D-GalNAc-(1-&gt;3)-beta-D-GlcNAc-(1-&gt;4)-alpha-D-Man]-L-Thr-[protein] + UDP + H(+). Its pathway is protein modification; protein glycosylation. Its function is as follows. Beta-1,3-N-acetylgalactosaminyltransferase that synthesizes a unique carbohydrate structure, GalNAc-beta-1-3GlcNAc, on N- and O-glycans. Has no galactose nor galactosaminyl transferase activity toward any acceptor substrate. Involved in alpha-dystroglycan (DAG1) glycosylation: acts coordinately with GTDC2/POMGnT2 to synthesize a GalNAc-beta3-GlcNAc-beta-terminus at the 4-position of protein O-mannose in the biosynthesis of the phosphorylated O-mannosyl trisaccharide (N-acetylgalactosamine-beta-3-N-acetylglucosamine-beta-4-(phosphate-6-)mannose), a carbohydrate structure present in alpha-dystroglycan, which is required for binding laminin G-like domain-containing extracellular proteins with high affinity. This is UDP-GalNAc:beta-1,3-N-acetylgalactosaminyltransferase 2 (B3GALNT2) from Homo sapiens (Human).